Here is a 293-residue protein sequence, read N- to C-terminus: NAD kinase (293 aa).

The Proton acceptor role is filled by aspartate 72. Residues 72–73, 146–147, arginine 157, lysine 174, aspartate 176, 187–192, and glutamine 247 contribute to the NAD(+) site; these read DG, ND, and TAYALS.

This sequence belongs to the NAD kinase family. Requires a divalent metal cation as cofactor.

It is found in the cytoplasm. The enzyme catalyses NAD(+) + ATP = ADP + NADP(+) + H(+). In terms of biological role, involved in the regulation of the intracellular balance of NAD and NADP, and is a key enzyme in the biosynthesis of NADP. Catalyzes specifically the phosphorylation on 2'-hydroxyl of the adenosine moiety of NAD to yield NADP. This Marinomonas sp. (strain MWYL1) protein is NAD kinase.